The primary structure comprises 296 residues: Urease accessory protein UreD (296 aa).

It belongs to the UreD family. In terms of assembly, ureD, UreF and UreG form a complex that acts as a GTP-hydrolysis-dependent molecular chaperone, activating the urease apoprotein by helping to assemble the nickel containing metallocenter of UreC. The UreE protein probably delivers the nickel.

Its subcellular location is the cytoplasm. In terms of biological role, required for maturation of urease via the functional incorporation of the urease nickel metallocenter. The polypeptide is Urease accessory protein UreD (Synechococcus sp. (strain CC9311)).